We begin with the raw amino-acid sequence, 294 residues long: Protein CHLOROPLAST J-LIKE DOMAIN 1, chloroplastic (294 aa).

The transit peptide at 1–58 directs the protein to the chloroplast; it reads MAPALSTSCSSVMAFSTSNALRYHHPQISLRNSLRAPKSPSFVRLPLGKVLQSRIVIR. The Stromal segment spans residues 59–164; it reads AASSAAGNPQ…GPRFSRSSKN (106 aa). The segment at 74–152 is J-like domain; it reads NPYEVLGVNP…IKYADKQPII (79 aa). Residues 165 to 182 form a helical membrane-spanning segment; the sequence is DMLINLAISVVFSAWIAI. Residues 183–233 are Chloroplast intermembrane-facing; sequence KRNVEYKPLQFMSFVFVYRIFEKLKSFEAPSSPIYNEEGEESGRGLRMGKR. The chain crosses the membrane as a helical span at residues 234–256; it reads LLRSLSLVFGSILLASLAYTGFL. The Stromal portion of the chain corresponds to 257–275; it reads NGIEYMGYSIPMVLYNNQE. A helical transmembrane segment spans residues 276 to 293; sequence LIVTASSAFMLYVIASFY. Position 294 (Arg294) is a topological domain, chloroplast intermembrane.

In terms of assembly, interacts (via J-like domain) with ARC6 (via J domain).

It localises to the plastid. It is found in the chloroplast inner membrane. In terms of biological role, probably involved in the regulation of the fatty acid metabolic process in chloroplasts, especially chloroplastic galactolipids monogalactosyldiacylglycerol (MGDG) and digalactosyldiacylglycerol (DGDG). The sequence is that of Protein CHLOROPLAST J-LIKE DOMAIN 1, chloroplastic from Arabidopsis thaliana (Mouse-ear cress).